Reading from the N-terminus, the 677-residue chain is Threonine--tRNA ligase (677 aa).

A TGS domain is found at M1 to A59. A catalytic region spans residues D255 to P561. Zn(2+) is bound by residues C360, H411, and H538.

This sequence belongs to the class-II aminoacyl-tRNA synthetase family. In terms of assembly, homodimer. Requires Zn(2+) as cofactor.

The protein localises to the cytoplasm. The catalysed reaction is tRNA(Thr) + L-threonine + ATP = L-threonyl-tRNA(Thr) + AMP + diphosphate + H(+). Functionally, catalyzes the attachment of threonine to tRNA(Thr) in a two-step reaction: L-threonine is first activated by ATP to form Thr-AMP and then transferred to the acceptor end of tRNA(Thr). Also edits incorrectly charged L-seryl-tRNA(Thr). The protein is Threonine--tRNA ligase of Bifidobacterium longum (strain DJO10A).